The chain runs to 436 residues: GTPase Der (436 aa).

2 consecutive EngA-type G domains span residues 4-167 (PIVA…PDEA) and 175-351 (IRFS…DNHR). GTP contacts are provided by residues 10-17 (GRPNVGKS), 57-61 (DTGGI), 119-122 (NKVD), 181-188 (GRPNVGKS), 229-233 (DTAGM), and 294-297 (NKWD). In terms of domain architecture, KH-like spans 352–436 (KRITSSTLND…PIKLIVRARK (85 aa)).

This sequence belongs to the TRAFAC class TrmE-Era-EngA-EngB-Septin-like GTPase superfamily. EngA (Der) GTPase family. In terms of assembly, associates with the 50S ribosomal subunit.

Functionally, GTPase that plays an essential role in the late steps of ribosome biogenesis. In Leuconostoc mesenteroides subsp. mesenteroides (strain ATCC 8293 / DSM 20343 / BCRC 11652 / CCM 1803 / JCM 6124 / NCDO 523 / NBRC 100496 / NCIMB 8023 / NCTC 12954 / NRRL B-1118 / 37Y), this protein is GTPase Der.